A 232-amino-acid polypeptide reads, in one-letter code: Probable caffeoyl-CoA O-methyltransferase At4g26220 (232 aa).

Position 7 (lysine 7) interacts with substrate. S-adenosyl-L-methionine contacts are provided by residues threonine 49, glutamate 71, 73 to 74 (GV), serine 79, aspartate 97, and alanine 126. Aspartate 149 lines the substrate pocket. Residue aspartate 149 participates in a divalent metal cation binding. Position 151 (aspartate 151) interacts with S-adenosyl-L-methionine. Residues aspartate 175 and asparagine 176 each coordinate a divalent metal cation.

It belongs to the class I-like SAM-binding methyltransferase superfamily. Cation-dependent O-methyltransferase family. CCoAMT subfamily. It depends on a divalent metal cation as a cofactor.

It carries out the reaction (E)-caffeoyl-CoA + S-adenosyl-L-methionine = (E)-feruloyl-CoA + S-adenosyl-L-homocysteine + H(+). It participates in aromatic compound metabolism; phenylpropanoid biosynthesis. Functionally, methylates caffeoyl-CoA to feruloyl-CoA and 5-hydroxyferuloyl-CoA to sinapoyl-CoA. Plays a role in the synthesis of feruloylated polysaccharides. Involved in the reinforcement of the plant cell wall. Also involved in the responding to wounding or pathogen challenge by the increased formation of cell wall-bound ferulic acid polymers. This chain is Probable caffeoyl-CoA O-methyltransferase At4g26220, found in Arabidopsis thaliana (Mouse-ear cress).